The sequence spans 396 residues: Elongation factor Tu (396 aa).

Positions 10–205 constitute a tr-type G domain; it reads KPHVNIGTIG…AVDESIPDPV (196 aa). Residues 19-26 are G1; that stretch reads GHVDHGKT. 19–26 provides a ligand contact to GTP; that stretch reads GHVDHGKT. Position 26 (Thr26) interacts with Mg(2+). Residues 62 to 66 are G2; sequence GITIN. The tract at residues 83 to 86 is G3; it reads DAPG. Residues 83-87 and 138-141 contribute to the GTP site; these read DAPGH and NKAD. The G4 stretch occupies residues 138-141; the sequence is NKAD. The tract at residues 175–177 is G5; that stretch reads SAL.

The protein belongs to the TRAFAC class translation factor GTPase superfamily. Classic translation factor GTPase family. EF-Tu/EF-1A subfamily. Monomer.

The protein resides in the cytoplasm. It catalyses the reaction GTP + H2O = GDP + phosphate + H(+). In terms of biological role, GTP hydrolase that promotes the GTP-dependent binding of aminoacyl-tRNA to the A-site of ribosomes during protein biosynthesis. The sequence is that of Elongation factor Tu from Mycobacterium sp. (strain JLS).